The sequence spans 451 residues: Probable gamma-glutamyl phosphate reductase (451 aa).

This sequence belongs to the gamma-glutamyl phosphate reductase family.

It carries out the reaction L-glutamate 5-semialdehyde + phosphate + NADP(+) = L-glutamyl 5-phosphate + NADPH + H(+). It functions in the pathway amino-acid biosynthesis; L-proline biosynthesis; L-glutamate 5-semialdehyde from L-glutamate: step 2/2. Catalyzes the NADPH dependent reduction of L-gamma-glutamyl 5-phosphate into L-glutamate 5-semialdehyde and phosphate. The product spontaneously undergoes cyclization to form 1-pyrroline-5-carboxylate. This is Probable gamma-glutamyl phosphate reductase (pro1) from Schizosaccharomyces pombe (strain 972 / ATCC 24843) (Fission yeast).